The following is a 143-amino-acid chain: Transmembrane protein 80 (143 aa).

A run of 4 helical transmembrane segments spans residues 22–42 (LLCLSGTYYALYFLATLLLLV), 47–67 (VFTYPHSCLVLDLTLLFLMGI), 88–108 (LAASLVLTVGSALLSAYFLLW), and 122–142 (PLLALHGLEAVLQVVAIAAFV).

The protein resides in the membrane. It is found in the cell projection. The protein localises to the cilium. This is Transmembrane protein 80 (TMEM80) from Bos taurus (Bovine).